Reading from the N-terminus, the 77-residue chain is MESINFEETLKKLEDVVHKLEVEELSLDDSLKIFEEGIGLYRQCSNELNKIEKKISIIIEENEEFKKVPFPHDEEES.

The protein belongs to the XseB family. Heterooligomer composed of large and small subunits.

It localises to the cytoplasm. It carries out the reaction Exonucleolytic cleavage in either 5'- to 3'- or 3'- to 5'-direction to yield nucleoside 5'-phosphates.. Functionally, bidirectionally degrades single-stranded DNA into large acid-insoluble oligonucleotides, which are then degraded further into small acid-soluble oligonucleotides. The sequence is that of Exodeoxyribonuclease 7 small subunit from Alkaliphilus oremlandii (strain OhILAs) (Clostridium oremlandii (strain OhILAs)).